The chain runs to 217 residues: MKVAPSLLSADFMHLAKEIESVSNADFLHVDVMDGHYVPNLTMGPVVLENVTQMSQVPLDVHLMVENASFFAELFAPLKPQIISIHAENEKHPHRVLQLIKNLGITPGIVLNPHTHEESIKYLLESVGLVLLMSVNPGFGGQKFLDLVLEKCLKVKELIKRYNPSCLLEVDGGVNDKNIFELQQAGVDVVVSGSYIFKSKDRKLAIEGLQNVRQSLA.

Ser-6 provides a ligand contact to substrate. The a divalent metal cation site is built by His-29, Asp-31, and His-62. Asp-31 acts as the Proton acceptor in catalysis. Substrate is bound by residues His-62, Gly-138–Gly-141, Asp-171–Gly-173, and Gly-193–Ser-194. Residue Asp-171 coordinates a divalent metal cation. The active-site Proton donor is Asp-171.

The protein belongs to the ribulose-phosphate 3-epimerase family. A divalent metal cation is required as a cofactor.

It carries out the reaction D-ribulose 5-phosphate = D-xylulose 5-phosphate. Its pathway is carbohydrate degradation. Its function is as follows. Catalyzes the reversible epimerization of D-ribulose 5-phosphate to D-xylulose 5-phosphate. The polypeptide is Ribulose-phosphate 3-epimerase (Helicobacter pylori (strain ATCC 700392 / 26695) (Campylobacter pylori)).